Here is a 378-residue protein sequence, read N- to C-terminus: Ribosomal RNA large subunit methyltransferase G (378 aa).

It belongs to the methyltransferase superfamily. RlmG family.

It localises to the cytoplasm. It catalyses the reaction guanosine(1835) in 23S rRNA + S-adenosyl-L-methionine = N(2)-methylguanosine(1835) in 23S rRNA + S-adenosyl-L-homocysteine + H(+). In terms of biological role, specifically methylates the guanine in position 1835 (m2G1835) of 23S rRNA. In Shewanella baltica (strain OS185), this protein is Ribosomal RNA large subunit methyltransferase G.